Reading from the N-terminus, the 332-residue chain is MNELSNLSLESIERARERIEEHVFRTPLTTSRSLTELTGTQVSLKLEHYQRTGSFKLRGATNAILQLSPSDRARGVIAASTGNHGRALSYAAKAVGSRATICMSDLVPENKVSEIRKLGATVRIVGSSQDDAQVEVERLVAEEGLSMIPPFDHPHIIAGQRTVGLEIVEAMPDVAMVLLPLSGGGLAAGVAAAVKALRPHARIIGVTMDRGAAMKASIEAGHPVQVKEYRSLADSLGGGIGMANAWTFQMCRALLDDVVLVNEGEIAAGIRHAYEHERQILEGAGAVGIAALLSGKVAARGGSVGVVLSGQNIDMGLHREVINGVVRATEED.

Lysine 56 carries the N6-(pyridoxal phosphate)lysine modification.

It belongs to the serine/threonine dehydratase family. The cofactor is pyridoxal 5'-phosphate.

The catalysed reaction is L-threonine = 2-oxobutanoate + NH4(+). It functions in the pathway amino-acid biosynthesis; L-isoleucine biosynthesis; 2-oxobutanoate from L-threonine: step 1/1. The protein is Putative threonine dehydratase of Sinorhizobium fredii (strain NBRC 101917 / NGR234).